Reading from the N-terminus, the 333-residue chain is Transcription initiation factor IIB (333 aa).

The TFIIB-type zinc finger occupies 33–64 (EVYKCPICGNDKFVYNYERGEAVCIVCGAVVQ). Zn(2+)-binding residues include cysteine 37, cysteine 40, cysteine 56, and cysteine 59. 2 tandem repeats follow at residues 149-232 (QELE…LREL) and 243-324 (LYIS…ELAK).

Belongs to the TFIIB family.

Its function is as follows. Stabilizes TBP binding to an archaeal box-A promoter. Also responsible for recruiting RNA polymerase II to the pre-initiation complex (DNA-TBP-TFIIB). The polypeptide is Transcription initiation factor IIB (Pyrobaculum aerophilum (strain ATCC 51768 / DSM 7523 / JCM 9630 / CIP 104966 / NBRC 100827 / IM2)).